Consider the following 600-residue polypeptide: DNA ligase (600 aa).

D259 provides a ligand contact to ATP. The N6-AMP-lysine intermediate role is filled by K261. Residues R266, R281, E311, F351, R428, and K434 each contribute to the ATP site.

The protein belongs to the ATP-dependent DNA ligase family. The cofactor is Mg(2+).

The catalysed reaction is ATP + (deoxyribonucleotide)n-3'-hydroxyl + 5'-phospho-(deoxyribonucleotide)m = (deoxyribonucleotide)n+m + AMP + diphosphate.. DNA ligase that seals nicks in double-stranded DNA during DNA replication, DNA recombination and DNA repair. The polypeptide is DNA ligase (Acidianus ambivalens (Desulfurolobus ambivalens)).